The primary structure comprises 532 residues: Membrane protein insertase YidC (532 aa).

5 helical membrane passes run 7–27, 336–356, 413–433, 450–470, and 492–512; these read FFIF…QSQM, LTIL…ITFI, GGFL…YMLI, LSSQ…MFFI, and PVIF…YYII.

This sequence belongs to the OXA1/ALB3/YidC family. Type 1 subfamily. Interacts with the Sec translocase complex via SecD. Specifically interacts with transmembrane segments of nascent integral membrane proteins during membrane integration.

It localises to the cell membrane. Required for the insertion and/or proper folding and/or complex formation of integral membrane proteins into the membrane. Involved in integration of membrane proteins that insert both dependently and independently of the Sec translocase complex, as well as at least some lipoproteins. Aids folding of multispanning membrane proteins. The chain is Membrane protein insertase YidC from Buchnera aphidicola subsp. Acyrthosiphon pisum (strain 5A).